A 484-amino-acid chain; its full sequence is MLHQLTLAEIARALADKQFSAEELTRTLLGRIRQLDPQLNSFISITDDLAIAQAKAADERRANGENGALLGAPIAHKDLFCTQGVRTSCGSKMLDNFVSPYDATVVEKLAAAGAVTLGKLNMDEFAMGSSNQSSHYGAVNNPWSLDRVPGGSSGGSAAAVAARLLPAATGTDTGGSIRQPAALTNLTGIKPTYGRVSRWGMIAYASSLDQGGPLARTAEDCALMLGVMAGFDPKDSTSVEQPVDDYLAALQKPLSGLRIGLPREYFGAGLDSRIADAVLAVVEELKTLGATVKDISLPNMQHAIPAYYVIAPAEASSNLSRFDGVRYGYRCDAPQNLEDLYKRSRAEGFGSEVKNRIMVGTYALSAGYYDAYYLQAQKIRRLIKNDFVSAFAEVDVILGPTTPNPAWKIGEKNDDPVSQYLEDIYTITANLAGLPGLSMPAGFVDGLPVGVQLLAPYFQEGRLLNVAHQYQQVSDWHTRTPAGF.

Residues Lys77 and Ser152 each act as charge relay system in the active site. The active-site Acyl-ester intermediate is the Ser176.

The protein belongs to the amidase family. GatA subfamily. In terms of assembly, heterotrimer of A, B and C subunits.

The enzyme catalyses L-glutamyl-tRNA(Gln) + L-glutamine + ATP + H2O = L-glutaminyl-tRNA(Gln) + L-glutamate + ADP + phosphate + H(+). Allows the formation of correctly charged Gln-tRNA(Gln) through the transamidation of misacylated Glu-tRNA(Gln) in organisms which lack glutaminyl-tRNA synthetase. The reaction takes place in the presence of glutamine and ATP through an activated gamma-phospho-Glu-tRNA(Gln). The protein is Glutamyl-tRNA(Gln) amidotransferase subunit A of Pseudomonas aeruginosa (strain LESB58).